We begin with the raw amino-acid sequence, 158 residues long: Small ribosomal subunit protein uS7 (158 aa).

The protein belongs to the universal ribosomal protein uS7 family. Part of the 30S ribosomal subunit. Contacts proteins S9 and S11.

One of the primary rRNA binding proteins, it binds directly to 16S rRNA where it nucleates assembly of the head domain of the 30S subunit. Is located at the subunit interface close to the decoding center, probably blocks exit of the E-site tRNA. The polypeptide is Small ribosomal subunit protein uS7 (Porphyromonas gingivalis (strain ATCC BAA-308 / W83)).